Reading from the N-terminus, the 7124-residue chain is Replicase polyprotein 1ab (7124 aa).

Residues 25-45 (SEKLGSPERSEEDGFCPSAAQ) are disordered. Positions 54–196 (LINHVRVDCS…PWSILLRKGG (143 aa)) constitute a CoV Nsp1 globular domain. In terms of domain architecture, BetaCoV Nsp1 C-terminal spans 217-247 (FNVEDACEEVHLNPKGKYSRKAYALLKGYRG). Positions 251-511 (ILFLDQYGCD…TDAICRSLYM (261 aa)) constitute a CoV Nsp2 N-terminal domain. Residues C390, C395, C411, and C414 each coordinate Zn(2+). Residues 390 to 414 (CCGDACDFRGWVPGNMMDGFLCPGC) form a C4 region. A CoV Nsp2 middle domain is found at 518–706 (CGNLEQRAIL…VDKFKVFFKV (189 aa)). Residues 726-832 (SNRVCLAGCK…LDQCWRFPCA (107 aa)) enclose the CoV Nsp2 C-terminal domain. Residues 834–946 (KKVEFNDKPK…MYCSFSAPDD (113 aa)) enclose the Ubiquitin-like 1 domain. Residues 1031 to 1268 (AFDAIYSEAL…IAQLYGSCIT (238 aa)) enclose the Peptidase C16 1 domain. The For PL1-PRO activity role is filled by C1068. 4 residues coordinate Zn(2+): C1145, C1148, C1171, and C1173. The C4-type 1 zinc finger occupies 1145 to 1173 (CLKCDMDLKLQGLDAMFFYGDVVSHVCKC). Catalysis depends on for PL1-PRO activity residues H1219 and D1230. One can recognise a Macro domain in the interval 1269-1429 (PNVCFVKGDV…VIEKCQVTSI (161 aa)). In terms of domain architecture, DPUP spans 1484 to 1556 (DDARVFVQAH…VSQIRALLAN (73 aa)). One can recognise a Ubiquitin-like 2 domain in the interval 1555 to 1610 (ANKVDVLCTVDGVNFRSCCVAEGEVFGKTLGSVFCDGINVTKVRCSAIHKGKVFFQ). Residues 1625 to 1884 (AFGFDEPQLL…CVEYNPDLSQ (260 aa)) enclose the Peptidase C16 2 domain. C1663 serves as the catalytic For PL2-PRO activity. C1741, C1743, C1775, and C1777 together coordinate Zn(2+). The segment at 1741-1777 (CKCGVKQEQRKGVDAVMHFGTLDKGDLAKGYTIACTC) adopts a C4-type 2 zinc-finger fold. Catalysis depends on for PL2-PRO activity residues H1820 and D1834. Residues 1898–1999 (IKAQFRTFEK…TYFNRPSVVC (102 aa)) form the Nucleic acid-binding domain. Residues 2053–2202 (QVVSGFLSDL…TDNKVIYTTE (150 aa)) form the G2M domain. 2 helical membrane-spanning segments follow: residues 2232 to 2252 (FFLV…NVIL) and 2260 to 2280 (IGFF…TFGI). The segment at 2232 to 2408 (FFLVATVFLL…FTLLRFYIVV (177 aa)) is HD1. The 3Ecto domain occupies 2268-2329 (GQIVAWVKTT…AINVVQHVVD (62 aa)). 2 cysteine pairs are disulfide-bonded: C2284–C2308 and C2299–C2305. 2 helical membrane-spanning segments follow: residues 2346–2366 (LVIG…LIGM) and 2388–2408 (FFVF…YIVV). The segment at 2416–2506 (CLCRHVMYGC…ELKRPVNPTD (91 aa)) is Y1. Residues 2416–2783 (CLCRHVMYGC…LTTPFSLKGG (368 aa)) enclose the CoV Nsp3 Y domain. H2420, C2425, C2430, C2433, C2466, H2469, C2473, and C2476 together coordinate Zn(2+). The interval 2420–2433 (HVMYGCSRPGCLFC) is ZF1. The ZF2 stretch occupies residues 2466 to 2476 (CAKHQWNCLNC). Residues 2507–2599 (SAYYLVTEVK…LVEKKLITTA (93 aa)) form a Y2 region. The segment at 2507-2783 (SAYYLVTEVK…LTTPFSLKGG (277 aa)) is coV-Y. The Y3 stretch occupies residues 2600–2682 (NTGLSVSQTM…KSIMSAVNAG (83 aa)). The segment at 2683-2783 (VDFTDESCNN…LTTPFSLKGG (101 aa)) is Y4. 7 helical membrane passes run 2789 to 2809 (VLQW…ALMP), 2869 to 2889 (ACPV…FNVP), 3042 to 3062 (AFDL…FFAL), 3064 to 3084 (ASSV…YYLI), 3096 to 3116 (VVVI…VFQV), 3123 to 3143 (LYAC…SVVM), and 3148 to 3168 (LVMY…AVVV). The interval 2789–3168 (VLQWLFVVNL…FCIIYVAVVV (380 aa)) is HD2. The 98-residue stretch at 3182–3279 (LGTEVRSDGT…TASVTTSFLQ (98 aa)) folds into the Nsp4C domain. Residues 3280 to 3582 (SGIVKMVFPT…YQQLAGVKLQ (303 aa)) enclose the Peptidase C30 domain. Active-site for 3CL-PRO activity residues include H3320 and C3424. The interval 3525–3808 (LVLDALASMT…VCCCYWGVLS (284 aa)) is HD3. Helical transmembrane passes span 3591–3611 (GTCC…SAFV), 3621–3641 (THML…MLLV), 3647–3667 (YLTM…YLVV), 3690–3710 (TYMD…FVTM), 3717–3737 (VFSV…WYFG), 3744–3764 (VLLF…LSLA), and 3788–3808 (LVLL…GVLS). The RdRp Nsp7 cofactor domain occupies 3870-3958 (SRLTDVKCVN…DYVRDSTVLQ (89 aa)). Residues 3959–4155 (ALQSEFVNMA…HNEVSSVVLQ (197 aa)) form the RdRp Nsp8 cofactor domain. Residues 4156–4265 (NNELMPQKLR…GTLSSTVRLQ (110 aa)) form the Nsp9 ssRNA-binding domain. An ExoN/MTase coactivator domain is found at 4266 to 4403 (AGTATEYASN…CVGTGSQFQS (138 aa)). The Zn(2+) site is built by C4339, C4342, H4348, C4355, C4381, C4384, C4392, and C4394. Zinc fingers lie at residues 4339 to 4355 (CIYC…DGLC) and 4381 to 4394 (CQVC…SCSC). In terms of domain architecture, NiRAN spans 4408-4663 (FLNRVRGTSV…DSELFINGTY (256 aa)). Residues N4611 and D4620 each contribute to the Mn(2+) site. A Nsp12 Interface domain is found at 4664 to 4762 (REFDLVQYDF…MNMDVDTHRY (99 aa)). The Zn(2+) site is built by H4693, C4699, C4704, C4708, and C4885. The Nsp12 RNA-dependent RNA polymerase domain occupies 4763-5330 (RLSLKDLLLY…NMYLRSAVMQ (568 aa)). A rdRp Fingers N-ter region spans residues 4765–4979 (SLKDLLLYAA…HQKCLKSIAA (215 aa)). A rdRp Palm N-ter region spans residues 4980–5018 (TRGVPVVIGTTKFYGGWDDMLRRLIKDVDSPVLMGWDYP). The RdRp catalytic domain maps to 5010-5172 (PVLMGWDYPK…CYNSEFASKG (163 aa)). Positions 5019 to 5077 (KCDRAMPNILRIISSLVLARKHDSCCSHTDRFYRLANECAQVLSEIVMCGGCYYVKPGG) are rdRp Fingers C-ter. Zn(2+) contacts are provided by H5040, C5043, and C5044. Positions 5078-5213 (TSSGDATTAF…EKGPHEFCSQ (136 aa)) are rdRp Palm C-ter. Residues S5157, D5158, and D5159 contribute to the active site. Residues 5214–5330 (HTMLVKMDGD…NMYLRSAVMQ (117 aa)) are rdRp Thumb. In terms of domain architecture, CV ZBD spans 5331 to 5443 (SVGACVVCSS…EDFNKIASCK (113 aa)). Positions 5335, 5338, 5346, 5349, 5356, 5359, 5363, 5369, 5380, 5385, 5402, and 5405 each coordinate Zn(2+). Positions 5586–5767 (SVPETFQNNV…MCCLGPDIFL (182 aa)) constitute a (+)RNA virus helicase ATP-binding domain. ATP is bound at residue 5611-5618 (GPPGTGKS). Residues 5768–5937 (GTCYRCPKEI…RLQCTTNLFK (170 aa)) form the (+)RNA virus helicase C-terminal domain. The ExoN domain maps to 6001–6216 (LFITRDEAIR…RCLAVHDCFC (216 aa)). Residues D6019, E6021, and E6120 contribute to the active site. Residues C6136, C6139, C6155, H6158, H6186, C6190, and H6193 each coordinate Zn(2+). Catalysis depends on residues H6197 and D6202. Residue C6208 coordinates Zn(2+). An N7-MTase domain is found at 6225 to 6451 (YPIISNEVSV…NLWNTFTRLQ (227 aa)). 6260–6266 (DIGNPKG) serves as a coordination point for S-adenosyl-L-methionine. The interval 6338 to 6352 (CNGGSLYVNKHAFHT) is gpppA-binding. Residues C6376, C6397, C6408, and H6411 each contribute to the Zn(2+) site. Residues 6452-6512 (SLENVVYNLV…NVAVELFAKR (61 aa)) form the Nsp15 N-terminal oligomerization domain. The region spanning 6513–6633 (SIRPHPELKL…FAMRRDGDDV (121 aa)) is the AV-Nsp11N/CoV-Nsp15M domain. A NendoU domain is found at 6683 to 6822 (APRSEMEKDF…NEEKVMTFYP (140 aa)). Residues H6713, H6728, K6768, K6871, D6955, K6995, and E7028 contribute to the active site. The 295-residue stretch at 6827 to 7121 (AADWKPGYVM…KEVFVGDSLV (295 aa)) folds into the Nidovirus-type SAM-dependent 2'-O-MTase domain.

The protein belongs to the coronaviruses polyprotein 1ab family. In terms of assembly, interacts with host PHB and PHB2. As to quaternary structure, interacts with papain-like protease nsp3 and non-structural protein 6. Monomer. Homodimer. Only the homodimer shows catalytic activity. In terms of assembly, interacts with nsp8 and nsp12 to form the replication-transcription complex (RTC): nsp12, nsp7, two subunits of nsp8, and up to two subunits of nsp13. As to quaternary structure, interacts with nsp7, nsp13 and nsp12 to form the replication-transcription complex (RTC): nsp12, nsp7, two subunits of nsp8, and up to two subunits of nsp13. Interacts with nsp12. In terms of assembly, interacts with proofreading exoribonuclease nsp14 and 2'-O-methyltransferase nsp16; these interactions enhance nsp14 and nsp16 enzymatic activities. As to quaternary structure, interacts with nsp7 and nsp8 to form the replication-transcription complex (RTC): nsp12, nsp7, two subunits of nsp8, and up to two subunits of nsp13. Interacts with nsp9. Interacts with nsp8 to form the replication-transcription complex (RTC): nsp12, nsp7, two subunits of nsp8, and up to two subunits of nsp13. The cofactor is Mn(2+). Mg(2+) serves as cofactor. Post-translationally, specific enzymatic cleavages in vivo by its own proteases yield mature proteins. 3CL-PRO and PL-PRO proteinases are autocatalytically processed.

It is found in the host membrane. It localises to the host cytoplasm. Its subcellular location is the host perinuclear region. The protein resides in the host endoplasmic reticulum-Golgi intermediate compartment. It carries out the reaction RNA(n) + a ribonucleoside 5'-triphosphate = RNA(n+1) + diphosphate. The enzyme catalyses ATP + H2O = ADP + phosphate + H(+). It catalyses the reaction Thiol-dependent hydrolysis of ester, thioester, amide, peptide and isopeptide bonds formed by the C-terminal Gly of ubiquitin (a 76-residue protein attached to proteins as an intracellular targeting signal).. The catalysed reaction is a 5'-end (N(7)-methyl 5'-triphosphoguanosine)-ribonucleoside in mRNA + S-adenosyl-L-methionine = a 5'-end (N(7)-methyl 5'-triphosphoguanosine)-(2'-O-methyl-ribonucleoside) in mRNA + S-adenosyl-L-homocysteine + H(+). It carries out the reaction uridylyl-uridylyl-ribonucleotide-RNA = a 3'-end uridylyl-2',3'-cyclophospho-uridine-RNA + a 5'-end dephospho-ribonucleoside-RNA. The enzyme catalyses a 5'-end diphospho-ribonucleoside in mRNA + GTP + H(+) = a 5'-end (5'-triphosphoguanosine)-ribonucleoside in mRNA + diphosphate. It catalyses the reaction a 5'-end (5'-triphosphoguanosine)-ribonucleoside in mRNA + S-adenosyl-L-methionine = a 5'-end (N(7)-methyl 5'-triphosphoguanosine)-ribonucleoside in mRNA + S-adenosyl-L-homocysteine. Its function is as follows. The replicase polyprotein of coronaviruses is a multifunctional protein: it contains the activities necessary for the transcription of negative stranded RNA, leader RNA, subgenomic mRNAs and progeny virion RNA as well as proteinases responsible for the cleavage of the polyprotein into functional products. Functionally, inhibits host translation by interacting with the 40S ribosomal subunit. The nsp1-40S ribosome complex further induces an endonucleolytic cleavage near the 5'UTR of host mRNAs, targeting them for degradation. Viral mRNAs are not susceptible to nsp1-mediated endonucleolytic RNA cleavage thanks to the presence of a 5'-end leader sequence and are therefore protected from degradation. By suppressing host gene expression, nsp1 facilitates efficient viral gene expression in infected cells and evasion from host immune response. May play a role in the modulation of host cell survival signaling pathway by interacting with host PHB and PHB2. Indeed, these two proteins play a role in maintaining the functional integrity of the mitochondria and protecting cells from various stresses. In terms of biological role, responsible for the cleavages located at the N-terminus of the replicase polyprotein. In addition, PL-PRO possesses a deubiquitinating/deISGylating activity and processes both 'Lys-48'- and 'Lys-63'-linked polyubiquitin chains from cellular substrates. Participates together with nsp4 in the assembly of virally-induced cytoplasmic double-membrane vesicles necessary for viral replication. Antagonizes innate immune induction of type I interferon by blocking the phosphorylation, dimerization and subsequent nuclear translocation of host IRF3. Also prevents host NF-kappa-B signaling. Its function is as follows. Participates in the assembly of virally-induced cytoplasmic double-membrane vesicles necessary for viral replication. Functionally, cleaves the C-terminus of replicase polyprotein at 11 sites. Recognizes substrates containing the core sequence [ILMVF]-Q-|-[SGACN]. Also able to bind an ADP-ribose-1''-phosphate (ADRP). Plays a role in the initial induction of autophagosomes from host endoplasmic reticulum. Later, limits the expansion of these phagosomes that are no longer able to deliver viral components to lysosomes. In terms of biological role, forms a hexadecamer with nsp8 (8 subunits of each) that may participate in viral replication by acting as a primase. Alternatively, may synthesize substantially longer products than oligonucleotide primers. Its function is as follows. Forms a hexadecamer with nsp7 (8 subunits of each) that may participate in viral replication by acting as a primase. Alternatively, may synthesize substantially longer products than oligonucleotide primers. Functionally, forms a primer, NSP9-pU, which is utilized by the polymerase for the initiation of RNA chains. Interacts with ribosome signal recognition particle RNA (SRP). Together with NSP8, suppress protein integration into the cell membrane, thereby disrupting host immune defenses. Plays a pivotal role in viral transcription by stimulating both nsp14 3'-5' exoribonuclease and nsp16 2'-O-methyltransferase activities. Therefore plays an essential role in viral mRNAs cap methylation. In terms of biological role, RNA-directed RNA polymerase that catalyzes the transcription of viral genomic and subgenomic RNAs. Acts in complex with nsp7 and nsp8 to transcribe both the minus and positive strands of genomic RNA. The kinase-like NiRAN domain of NSP12 attaches one or more nucleotides to the amino terminus of NSP9, forming a covalent RNA-protein intermediate that serves as transcription/replication primer. Subgenomic RNAs (sgRNAs) are formed by discontinuous transcription: The polymerase has the ability to pause at transcription-regulating sequences (TRS) and jump to the leader TRS, resulting in a major deletion. This creates a series of subgenomic RNAs that are replicated, transcribed and translated. In addition, Nsp12 is a subunit of the viral RNA capping enzyme that catalyzes the RNA guanylyltransferase reaction for genomic and sub-genomic RNAs. Subsequently, the NiRAN domain transfers RNA to GDP, and forms the core cap structure GpppA-RNA. Its function is as follows. Multi-functional protein with a zinc-binding domain in N-terminus displaying RNA and DNA duplex-unwinding activities with 5' to 3' polarity. Activity of helicase is dependent on magnesium. Functionally, plays a role in viral RNA synthesis through two distinct activities. The N7-guanine methyltransferase activity plays a role in the formation of the cap structure GpppA-RNA. The proofreading exoribonuclease reduces the sensitivity of the virus to RNA mutagens during replication. This activity acts on both ssRNA and dsRNA in a 3'-5' direction. Plays a role in viral transcription/replication and prevents the simultaneous activation of host cell dsRNA sensors, such as MDA5/IFIH1, OAS, and PKR. Acts by degrading the 5'-polyuridines generated during replication of the poly(A) region of viral genomic and subgenomic RNAs. Catalyzes a two-step reaction in which a 2'3'-cyclic phosphate (2'3'-cP) is first generated by 2'-O transesterification, which is then hydrolyzed to a 3'-phosphate (3'-P). If not degraded, poly(U) RNA would hybridize with poly(A) RNA tails and activate host dsRNA sensors. In terms of biological role, methyltransferase that mediates mRNA cap 2'-O-ribose methylation to the 5'-cap structure of viral mRNAs. N7-methyl guanosine cap is a prerequisite for binding of nsp16. Therefore plays an essential role in viral mRNAs cap methylation which is essential to evade immune system. This chain is Replicase polyprotein 1ab (rep), found in Murine coronavirus (strain 2) (MHV-2).